Reading from the N-terminus, the 518-residue chain is ATP synthase subunit alpha (518 aa).

169 to 176 (GDRQTGKT) serves as a coordination point for ATP.

The protein belongs to the ATPase alpha/beta chains family. F-type ATPases have 2 components, CF(1) - the catalytic core - and CF(0) - the membrane proton channel. CF(1) has five subunits: alpha(3), beta(3), gamma(1), delta(1), epsilon(1). CF(0) has three main subunits: a(1), b(2) and c(9-12). The alpha and beta chains form an alternating ring which encloses part of the gamma chain. CF(1) is attached to CF(0) by a central stalk formed by the gamma and epsilon chains, while a peripheral stalk is formed by the delta and b chains.

It is found in the cell membrane. The catalysed reaction is ATP + H2O + 4 H(+)(in) = ADP + phosphate + 5 H(+)(out). Produces ATP from ADP in the presence of a proton gradient across the membrane. The alpha chain is a regulatory subunit. The polypeptide is ATP synthase subunit alpha (Mycoplasma genitalium (strain ATCC 33530 / DSM 19775 / NCTC 10195 / G37) (Mycoplasmoides genitalium)).